The sequence spans 811 residues: Ribonucleoside-diphosphate reductase large subunit (811 aa).

Substrate-binding positions include Thr-231, 246 to 247 (SC), Gly-277, 450 to 454 (NLCTE), and 636 to 640 (PTASS). Cys-247 and Cys-467 are joined by a disulfide. Residue Asn-450 is the Proton acceptor of the active site. Cys-452 (cysteine radical intermediate) is an active-site residue. Glu-454 functions as the Proton acceptor in the catalytic mechanism.

It belongs to the ribonucleoside diphosphate reductase large chain family. As to quaternary structure, heterotetramer composed of a homodimer of the large subunit (R1) and a homodimer of the small subunit (R2). Larger multisubunit protein complex are also active, composed of (R1)n(R2)n.

The enzyme catalyses a 2'-deoxyribonucleoside 5'-diphosphate + [thioredoxin]-disulfide + H2O = a ribonucleoside 5'-diphosphate + [thioredoxin]-dithiol. Its function is as follows. Ribonucleoside-diphosphate reductase holoenzyme provides the precursors necessary for viral DNA synthesis. Allows virus growth in non-dividing cells, as well as reactivation from latency in infected hosts. Catalyzes the biosynthesis of deoxyribonucleotides from the corresponding ribonucleotides. The sequence is that of Ribonucleoside-diphosphate reductase large subunit from Amazona oratrix (yellow-headed parrot).